A 347-amino-acid polypeptide reads, in one-letter code: NADH-ubiquinone oxidoreductase chain 2 (347 aa).

The next 10 membrane-spanning stretches (helical) occupy residues 13 to 33 (IFTG…WLGL), 55 to 75 (AAIK…MAIL), 96 to 116 (LMIV…FWVP), 122 to 142 (VPLT…ISIM), 151 to 171 (TNIL…GGLN), 178 to 198 (ILAY…PYNP), 199 to 219 (DITI…FLIL), 237 to 257 (LTWL…LPPL), 274 to 294 (GNLI…YFYV), and 326 to 346 (LPTL…ILSI).

This sequence belongs to the complex I subunit 2 family. As to quaternary structure, core subunit of respiratory chain NADH dehydrogenase (Complex I) which is composed of 45 different subunits. Interacts with TMEM242.

The protein localises to the mitochondrion inner membrane. The catalysed reaction is a ubiquinone + NADH + 5 H(+)(in) = a ubiquinol + NAD(+) + 4 H(+)(out). Core subunit of the mitochondrial membrane respiratory chain NADH dehydrogenase (Complex I) which catalyzes electron transfer from NADH through the respiratory chain, using ubiquinone as an electron acceptor. Essential for the catalytic activity and assembly of complex I. The sequence is that of NADH-ubiquinone oxidoreductase chain 2 from Pongo abelii (Sumatran orangutan).